The primary structure comprises 388 residues: MNLHEYQGKQLFKEYGLPVSEGYAADTAQGAVEAADRIGGEEWVVKCQVHAGGRGKAGGVKLVKNKDDIRAFAENWLGKNLVTFQTDENGQPVSKILVESCTDIANELYLGAVVDRTTRRVVFMASTEGGVEIETVAEETPEKILKAEIDPIVGPQPYQAREMAFALGLSGVQIKQFTQIFLGLAKMFEELDVALIEINPLVIKTDGNLHCLDAKVGIDGNALYRQPKLKDMQDPSQEDAREAHAAQWELNYVALDGNVGCMVNGAGLAMGTMDIVNLHGGKPANFLDVGGGATKERVAEAFKIILSDDNVKAVLVNIFGGIVRCDMIAEGIIGAVKEVGVEVPVVVRLEGTNAELGREVLANSGLDIIAAESLTDAAQKVVAAAEGK.

An ATP-grasp domain is found at 9-244 (KQLFKEYGLP…PSQEDAREAH (236 aa)). ATP is bound by residues lysine 46, 53–55 (GRG), glutamate 99, threonine 102, and glutamate 107. Residues asparagine 199 and aspartate 213 each contribute to the Mg(2+) site. Residues asparagine 264 and 321–323 (GIV) each bind substrate.

The protein belongs to the succinate/malate CoA ligase beta subunit family. Heterotetramer of two alpha and two beta subunits. Mg(2+) serves as cofactor.

It carries out the reaction succinate + ATP + CoA = succinyl-CoA + ADP + phosphate. The enzyme catalyses GTP + succinate + CoA = succinyl-CoA + GDP + phosphate. It functions in the pathway carbohydrate metabolism; tricarboxylic acid cycle; succinate from succinyl-CoA (ligase route): step 1/1. In terms of biological role, succinyl-CoA synthetase functions in the citric acid cycle (TCA), coupling the hydrolysis of succinyl-CoA to the synthesis of either ATP or GTP and thus represents the only step of substrate-level phosphorylation in the TCA. The beta subunit provides nucleotide specificity of the enzyme and binds the substrate succinate, while the binding sites for coenzyme A and phosphate are found in the alpha subunit. The sequence is that of Succinate--CoA ligase [ADP-forming] subunit beta from Alteromonas mediterranea (strain DSM 17117 / CIP 110805 / LMG 28347 / Deep ecotype).